Consider the following 299-residue polypeptide: MQTGQIIRALSGFYDVQSEHKIYRTRARGNFRKRKITPLVGDFVEFESESQTESGYILEILDRKNEMIRPPVANIDQAVVIVSAVEPDFSLNLLDRFLIYLESLNIQGLVYLTKTDMISDEKYQEIKQYLDYYEKVGYPTFAPRTAFTPEIIQAIEDTFPDKTTVFTGQTGAGKSTLLNHIDPKLNLATAEISQSLNRGKHTTRHIELIPLNDGLVGDTPGFSSLGILNVTSETLVSRYPEFREIGQDCKFRTCQHVMEPKCAVKAAVDAGEIMQSRYTNYLQFRAELKDIRPVYKKSK.

In terms of domain architecture, CP-type G spans 64-225 (KNEMIRPPVA…VGDTPGFSSL (162 aa)). GTP is bound by residues 113–116 (TKTD) and 168–176 (GQTGAGKST). Residues cysteine 249, cysteine 254, histidine 256, and cysteine 262 each coordinate Zn(2+).

This sequence belongs to the TRAFAC class YlqF/YawG GTPase family. RsgA subfamily. In terms of assembly, monomer. Associates with 30S ribosomal subunit, binds 16S rRNA. Requires Zn(2+) as cofactor.

Its subcellular location is the cytoplasm. One of several proteins that assist in the late maturation steps of the functional core of the 30S ribosomal subunit. Helps release RbfA from mature subunits. May play a role in the assembly of ribosomal proteins into the subunit. Circularly permuted GTPase that catalyzes slow GTP hydrolysis, GTPase activity is stimulated by the 30S ribosomal subunit. The protein is Small ribosomal subunit biogenesis GTPase RsgA of Latilactobacillus sakei subsp. sakei (strain 23K) (Lactobacillus sakei subsp. sakei).